We begin with the raw amino-acid sequence, 953 residues long: Isoleucine--tRNA ligase (953 aa).

A 'HIGH' region motif is present at residues 57–67 (PYANGDIHIGH). L-isoleucyl-5'-AMP is bound at residue E582. The 'KMSKS' region motif lies at 623–627 (KMSKS). Position 626 (K626) interacts with ATP. Zn(2+) contacts are provided by C916, C919, C936, and C939.

This sequence belongs to the class-I aminoacyl-tRNA synthetase family. IleS type 1 subfamily. As to quaternary structure, monomer. Zn(2+) serves as cofactor.

Its subcellular location is the cytoplasm. It catalyses the reaction tRNA(Ile) + L-isoleucine + ATP = L-isoleucyl-tRNA(Ile) + AMP + diphosphate. Its function is as follows. Catalyzes the attachment of isoleucine to tRNA(Ile). As IleRS can inadvertently accommodate and process structurally similar amino acids such as valine, to avoid such errors it has two additional distinct tRNA(Ile)-dependent editing activities. One activity is designated as 'pretransfer' editing and involves the hydrolysis of activated Val-AMP. The other activity is designated 'posttransfer' editing and involves deacylation of mischarged Val-tRNA(Ile). The sequence is that of Isoleucine--tRNA ligase from Bordetella parapertussis (strain 12822 / ATCC BAA-587 / NCTC 13253).